A 1262-amino-acid chain; its full sequence is Protein stoned-B (1262 aa).

Short sequence motifs (NPF) lie at residues Asn-3–Phe-5, Asn-19–Phe-21, Asn-33–Phe-35, and Asn-43–Phe-45. The disordered stretch occupies residues Ala-17–Met-36. The tract at residues Ala-49–Ala-189 is disordered. Acidic residues predominate over residues Asp-50–Ala-60. Over residues Pro-101–His-111 the composition is skewed to low complexity. Pro residues predominate over residues His-115–Pro-124. Over residues Thr-128–Glu-145 the composition is skewed to polar residues. A compositionally biased stretch (low complexity) spans Asp-172–Ala-189. An NPF 5 motif is present at residues Asn-210–Phe-212. Disordered stretches follow at residues Val-225–Thr-452 and Glu-474–Pro-507. Residues Lys-233 to Ala-272 show a composition bias toward pro residues. Residues Asp-325–Gln-345 are compositionally biased toward acidic residues. Over residues Gln-384–Thr-401 the composition is skewed to polar residues. Acidic residues predominate over residues Asp-417 to Glu-429. The short motif at Asn-493 to Phe-495 is the NPF 6 element. Residues Ser-623 and Ser-626 each carry the phosphoserine modification. Residues Ser-643–Asp-709 form a disordered region. An NPF 7 motif is present at residues Asn-673–Phe-675. The SHD domain maps to Gly-728 to Leu-902. The interval Lys-847–Val-1108 is interaction with Syt. The MHD domain occupies Met-906–Glu-1219. Positions Thr-1226–Asn-1262 are disordered. The span at Pro-1241–Pro-1254 shows a compositional bias: low complexity.

Belongs to the Stoned B family. Interacts with the second C2 domain of Syt.

The protein resides in the cytoplasm. It localises to the synapse. Adapter protein involved in endocytic recycling of synaptic vesicles membranes. May act by mediating the retrieval of synaptotagmin protein Syt from the plasma membrane, thereby facilitating the internalization of multiple synaptic vesicles from the plasma membrane. In Drosophila melanogaster (Fruit fly), this protein is Protein stoned-B (stnB).